Reading from the N-terminus, the 160-residue chain is Transcriptional repressor NrdR (160 aa).

Polar residues predominate over residues 1–11 (MRCPNCNSLDT). A disordered region spans residues 1–20 (MRCPNCNSLDTQVKDSRPTE). The segment at 3–34 (CPNCNSLDTQVKDSRPTEDSSVIRRRRVCIAC) is a zinc-finger region. One can recognise an ATP-cone domain in the interval 49–139 (LIVIKRNGRR…VYRNFREAKD (91 aa)).

The protein belongs to the NrdR family. Zn(2+) serves as cofactor.

Negatively regulates transcription of bacterial ribonucleotide reductase nrd genes and operons by binding to NrdR-boxes. The polypeptide is Transcriptional repressor NrdR (Rhodopseudomonas palustris (strain ATCC BAA-98 / CGA009)).